The sequence spans 460 residues: NADH-ubiquinone oxidoreductase chain 4 (460 aa).

13 consecutive transmembrane segments (helical) span residues 22–42, 61–81, 97–114, 118–140, 149–169, 196–216, 226–246, 259–279, 286–305, 309–331, 352–372, 395–415, and 437–457; these read WLWP…LSWL, PLST…ILAS, YISL…AFSA, IMFY…RWGN, TYFL…LLLL, IWWT…GVHL, PIAG…YGMM, LSYP…SICM, SLIA…GILI, WGFT…LFCL, MALP…LALP, IALT…MFLM, and LLIA…ELIW.

This sequence belongs to the complex I subunit 4 family.

It is found in the mitochondrion membrane. The enzyme catalyses a ubiquinone + NADH + 5 H(+)(in) = a ubiquinol + NAD(+) + 4 H(+)(out). Its function is as follows. Core subunit of the mitochondrial membrane respiratory chain NADH dehydrogenase (Complex I) that is believed to belong to the minimal assembly required for catalysis. Complex I functions in the transfer of electrons from NADH to the respiratory chain. The immediate electron acceptor for the enzyme is believed to be ubiquinone. This chain is NADH-ubiquinone oxidoreductase chain 4 (MT-ND4), found in Tetraodon nigroviridis (Spotted green pufferfish).